The primary structure comprises 380 residues: Beta sliding clamp (380 aa).

The protein belongs to the beta sliding clamp family. In terms of assembly, forms a ring-shaped head-to-tail homodimer around DNA which binds and tethers DNA polymerases and other proteins to the DNA. The DNA replisome complex has a single clamp-loading complex (3 tau and 1 each of delta, delta', psi and chi subunits) which binds 3 Pol III cores (1 core on the leading strand and 2 on the lagging strand) each with a beta sliding clamp dimer. Additional proteins in the replisome are other copies of gamma, psi and chi, Ssb, DNA helicase and RNA primase.

It is found in the cytoplasm. Functionally, confers DNA tethering and processivity to DNA polymerases and other proteins. Acts as a clamp, forming a ring around DNA (a reaction catalyzed by the clamp-loading complex) which diffuses in an ATP-independent manner freely and bidirectionally along dsDNA. Initially characterized for its ability to contact the catalytic subunit of DNA polymerase III (Pol III), a complex, multichain enzyme responsible for most of the replicative synthesis in bacteria; Pol III exhibits 3'-5' exonuclease proofreading activity. The beta chain is required for initiation of replication as well as for processivity of DNA replication. In Mycoplasma genitalium (strain ATCC 33530 / DSM 19775 / NCTC 10195 / G37) (Mycoplasmoides genitalium), this protein is Beta sliding clamp (dnaN).